A 340-amino-acid chain; its full sequence is GTPase Obg (340 aa).

In terms of domain architecture, Obg spans 1–158 (MSFIDEAKIY…KHIILKLKII (158 aa)). Residues 159 to 325 (SDVGIIGLPN…LSTLIKQIHK (167 aa)) enclose the OBG-type G domain. Residues 165–172 (GLPNAGKS), 190–194 (FTTLE), 211–214 (DIPG), 278–281 (NKSD), and 306–308 (SSI) each bind GTP. Residues serine 172 and threonine 192 each contribute to the Mg(2+) site.

Belongs to the TRAFAC class OBG-HflX-like GTPase superfamily. OBG GTPase family. Monomer. Mg(2+) serves as cofactor.

It localises to the cytoplasm. In terms of biological role, an essential GTPase which binds GTP, GDP and possibly (p)ppGpp with moderate affinity, with high nucleotide exchange rates and a fairly low GTP hydrolysis rate. Plays a role in control of the cell cycle, stress response, ribosome biogenesis and in those bacteria that undergo differentiation, in morphogenesis control. This is GTPase Obg from Ehrlichia canis (strain Jake).